Here is a 180-residue protein sequence, read N- to C-terminus: Cell wall / vacuolar inhibitor of fructosidase 2 (180 aa).

The N-terminal stretch at 1–23 (MASSLIFLLLVTLTFSASTLISA) is a signal peptide. The N-linked (GlcNAc...) asparagine glycan is linked to Asn26. Cys35 and Cys44 are oxidised to a cystine. Asn73 and Asn84 each carry an N-linked (GlcNAc...) asparagine glycan. Cys101 and Cys141 are oxidised to a cystine.

Belongs to the PMEI family. As to expression, mostly expressed at low levels in seedlings, stems, leaves and flowers (in all organs), and, to a lower extent, in roots and siliques.

The protein localises to the vacuole. In terms of biological role, inhibits fructosidases from both cell wall (cell wall invertase CWI) and vacuoles (vacuolar invertase VI). This Arabidopsis thaliana (Mouse-ear cress) protein is Cell wall / vacuolar inhibitor of fructosidase 2 (C/VIF2).